A 226-amino-acid chain; its full sequence is Clarin-3 (226 aa).

Residues 8–28 form a helical membrane-spanning segment; it reads LMFLSSFFTSLGSFIVICSIL. Residue asparagine 83 is glycosylated (N-linked (GlcNAc...) asparagine). 3 helical membrane passes run 92–112, 129–149, and 181–201; these read VTIL…GFTF, VYTW…LFVA, and FWLI…IIFY.

The protein belongs to the clarin family.

The protein resides in the membrane. The chain is Clarin-3 (CLRN3) from Homo sapiens (Human).